The sequence spans 344 residues: tRNA N6-adenosine threonylcarbamoyltransferase (344 aa).

The Fe cation site is built by His-111 and His-115. Substrate is bound by residues 134–138 (LVSGG), Asp-167, Gly-180, and Asn-272. Asp-300 lines the Fe cation pocket.

It belongs to the KAE1 / TsaD family. The cofactor is Fe(2+).

The protein resides in the cytoplasm. The enzyme catalyses L-threonylcarbamoyladenylate + adenosine(37) in tRNA = N(6)-L-threonylcarbamoyladenosine(37) in tRNA + AMP + H(+). Functionally, required for the formation of a threonylcarbamoyl group on adenosine at position 37 (t(6)A37) in tRNAs that read codons beginning with adenine. Is involved in the transfer of the threonylcarbamoyl moiety of threonylcarbamoyl-AMP (TC-AMP) to the N6 group of A37, together with TsaE and TsaB. TsaD likely plays a direct catalytic role in this reaction. The chain is tRNA N6-adenosine threonylcarbamoyltransferase from Idiomarina loihiensis (strain ATCC BAA-735 / DSM 15497 / L2-TR).